The primary structure comprises 359 residues: tRNA/tmRNA (uracil-C(5))-methyltransferase (359 aa).

S-adenosyl-L-methionine is bound by residues Q183, Y211, N216, E232, and D292. C317 functions as the Nucleophile in the catalytic mechanism. E351 acts as the Proton acceptor in catalysis.

This sequence belongs to the class I-like SAM-binding methyltransferase superfamily. RNA M5U methyltransferase family. TrmA subfamily.

The catalysed reaction is uridine(54) in tRNA + S-adenosyl-L-methionine = 5-methyluridine(54) in tRNA + S-adenosyl-L-homocysteine + H(+). The enzyme catalyses uridine(341) in tmRNA + S-adenosyl-L-methionine = 5-methyluridine(341) in tmRNA + S-adenosyl-L-homocysteine + H(+). Functionally, dual-specificity methyltransferase that catalyzes the formation of 5-methyluridine at position 54 (m5U54) in all tRNAs, and that of position 341 (m5U341) in tmRNA (transfer-mRNA). This chain is tRNA/tmRNA (uracil-C(5))-methyltransferase, found in Pseudomonas fluorescens (strain SBW25).